A 618-amino-acid chain; its full sequence is Grainyhead-like protein 1 homolog (618 aa).

The interval methionine 1–serine 91 is transcription activation. Over residues arginine 74–lysine 92 the composition is skewed to basic and acidic residues. A disordered region spans residues arginine 74–asparagine 94. The residue at position 208 (threonine 208) is a Phosphothreonine. Positions serine 248–isoleucine 474 constitute a Grh/CP2 DB domain. Interaction with DNA stretches follow at residues threonine 380–lysine 389 and arginine 427–arginine 430.

Belongs to the grh/CP2 family. Grainyhead subfamily. As to quaternary structure, binds DNA as homodimer. Homodimer, also forms heterodimers with GRHL2 or GRHL3. In terms of processing, methylation at Arg-9 and Lys-116 may be involved in regulating transcriptional activation.

It localises to the nucleus. In terms of biological role, transcription factor involved in epithelial development. Binds directly to the consensus DNA sequence 5'-AACCGGTT-3'. Important regulator of DSG1 in the context of hair anchorage and epidermal differentiation, participates in the maintenance of the skin barrier. There is no genetic interaction with GRHL3, nor functional cooperativity due to diverse target gene selectivity during epithelia development. May play a role in regulating glucose homeostasis and insulin signaling. In Pongo abelii (Sumatran orangutan), this protein is Grainyhead-like protein 1 homolog (GRHL1).